A 266-amino-acid chain; its full sequence is Metallo-beta-lactamase domain-containing protein 1 (266 aa).

The interval L48–A71 is disordered. Zn(2+) is bound by residues H114, H116, D118, H119, H169, D192, and H231. The disordered stretch occupies residues P229 to H266.

The protein belongs to the metallo-beta-lactamase superfamily. Glyoxalase II family. In terms of assembly, homodimer. Zn(2+) serves as cofactor.

It is found in the cytoplasm. Its subcellular location is the cytosol. The protein resides in the nucleus. The catalysed reaction is a ribonucleotidyl-ribonucleotide-RNA + H2O = a 3'-end ribonucleotide-RNA + a 5'-end 5'-phospho-ribonucleoside-RNA + H(+). Its function is as follows. Endoribonuclease that catalyzes the hydrolysis of histone-coding pre-mRNA 3'-end. Involved in histone pre-mRNA processing during the S-phase of the cell cycle, which is required for entering/progressing through S-phase. Cleaves histone pre-mRNA at a major and a minor cleavage site after the 5'-ACCCA-3' and the 5'-ACCCACA-3' sequence, respectively, and located downstream of the stem-loop. May require the presence of the HDE element located at the histone pre-RNA 3'-end to avoid non-specific cleavage. The polypeptide is Metallo-beta-lactamase domain-containing protein 1 (Homo sapiens (Human)).